A 343-amino-acid chain; its full sequence is Holliday junction branch migration complex subunit RuvB (343 aa).

Residues 1-181 (MDRIIDSAAT…FGIVQRLEFY (181 aa)) are large ATPase domain (RuvB-L). ATP-binding positions include I20, R21, G62, K65, T66, T67, 128 to 130 (EDF), R171, Y181, and R218. Position 66 (T66) interacts with Mg(2+). Residues 182-252 (SPEDLARIVR…VAQAAMQMLK (71 aa)) form a small ATPAse domain (RuvB-S) region. Residues 255–343 (QGGFDELDRR…SAFTDPEDLF (89 aa)) form a head domain (RuvB-H) region. DNA-binding residues include R291, R310, and R315.

This sequence belongs to the RuvB family. Homohexamer. Forms an RuvA(8)-RuvB(12)-Holliday junction (HJ) complex. HJ DNA is sandwiched between 2 RuvA tetramers; dsDNA enters through RuvA and exits via RuvB. An RuvB hexamer assembles on each DNA strand where it exits the tetramer. Each RuvB hexamer is contacted by two RuvA subunits (via domain III) on 2 adjacent RuvB subunits; this complex drives branch migration. In the full resolvosome a probable DNA-RuvA(4)-RuvB(12)-RuvC(2) complex forms which resolves the HJ.

The protein resides in the cytoplasm. It catalyses the reaction ATP + H2O = ADP + phosphate + H(+). Its function is as follows. The RuvA-RuvB-RuvC complex processes Holliday junction (HJ) DNA during genetic recombination and DNA repair, while the RuvA-RuvB complex plays an important role in the rescue of blocked DNA replication forks via replication fork reversal (RFR). RuvA specifically binds to HJ cruciform DNA, conferring on it an open structure. The RuvB hexamer acts as an ATP-dependent pump, pulling dsDNA into and through the RuvAB complex. RuvB forms 2 homohexamers on either side of HJ DNA bound by 1 or 2 RuvA tetramers; 4 subunits per hexamer contact DNA at a time. Coordinated motions by a converter formed by DNA-disengaged RuvB subunits stimulates ATP hydrolysis and nucleotide exchange. Immobilization of the converter enables RuvB to convert the ATP-contained energy into a lever motion, pulling 2 nucleotides of DNA out of the RuvA tetramer per ATP hydrolyzed, thus driving DNA branch migration. The RuvB motors rotate together with the DNA substrate, which together with the progressing nucleotide cycle form the mechanistic basis for DNA recombination by continuous HJ branch migration. Branch migration allows RuvC to scan DNA until it finds its consensus sequence, where it cleaves and resolves cruciform DNA. This Xylella fastidiosa (strain Temecula1 / ATCC 700964) protein is Holliday junction branch migration complex subunit RuvB.